The following is a 215-amino-acid chain: Cytochrome b6 (215 aa).

The helical transmembrane segment at 32 to 52 (IFYCLGGVTLICFLVQFATGF) threads the bilayer. C35 is a heme c binding site. Heme b contacts are provided by H86 and H100. A run of 3 helical transmembrane segments spans residues 90-110 (ASMMVLAMILHTFRVYLTGGF), 116-136 (LTWVTGVLLACLTVSFGVTGY), and 186-206 (AHTFVLPWLTVVFMLMHFLMI). 2 residues coordinate heme b: H187 and H202.

The protein belongs to the cytochrome b family. PetB subfamily. As to quaternary structure, the 4 large subunits of the cytochrome b6-f complex are cytochrome b6, subunit IV (17 kDa polypeptide, PetD), cytochrome f and the Rieske protein, while the 4 small subunits are PetG, PetL, PetM and PetN. The complex functions as a dimer. Requires heme b as cofactor. It depends on heme c as a cofactor.

Its subcellular location is the cell inner membrane. Its function is as follows. Component of the cytochrome b6-f complex, which mediates electron transfer between photosystem II (PSII) and photosystem I (PSI), cyclic electron flow around PSI, and state transitions. This is Cytochrome b6 from Gloeobacter violaceus (strain ATCC 29082 / PCC 7421).